We begin with the raw amino-acid sequence, 316 residues long: Beta-ketoacyl-[acyl-carrier-protein] synthase III (316 aa).

Active-site residues include Cys-112 and His-243. The tract at residues 244-248 (QANLR) is ACP-binding. Residue Asn-273 is part of the active site.

Belongs to the thiolase-like superfamily. FabH family. In terms of assembly, homodimer.

Its subcellular location is the cytoplasm. The enzyme catalyses malonyl-[ACP] + acetyl-CoA + H(+) = 3-oxobutanoyl-[ACP] + CO2 + CoA. Its pathway is lipid metabolism; fatty acid biosynthesis. Catalyzes the condensation reaction of fatty acid synthesis by the addition to an acyl acceptor of two carbons from malonyl-ACP. Catalyzes the first condensation reaction which initiates fatty acid synthesis and may therefore play a role in governing the total rate of fatty acid production. Possesses both acetoacetyl-ACP synthase and acetyl transacylase activities. Its substrate specificity determines the biosynthesis of branched-chain and/or straight-chain of fatty acids. This chain is Beta-ketoacyl-[acyl-carrier-protein] synthase III, found in Histophilus somni (strain 2336) (Haemophilus somnus).